A 350-amino-acid polypeptide reads, in one-letter code: MMNTERPAGPLRPPHPPHPPRYLALAGPTASGKTAAALAIARVHEVEIISVDSALVYRGMDIGTAKPSAAELAAVPHHLIDIRDPLQAYSAAEFVADAQALIAAITARGRLPLLVGGTMLYFKALLEGLDPMPKADPATRALIATEAAEQGWPALHAALAEVDPVSAKRLHPADSQRIARALEVYRLSGQPLSSFQTTKLIATNEGVTGARGQKCLNIPENDRCLISLEPQNRAWLHQRIAERFDAMLAAGFIDEVRALRARGDLQADLPAMRCVGYRQAWQALDGLWPMSELRDKGICATRQLAKRQLTWLRSMPERRVVACDAPDALDQVLALARDFVNAGNKLQGQP.

The disordered stretch occupies residues 1–20 (MMNTERPAGPLRPPHPPHPP). Pro residues predominate over residues 10-20 (PLRPPHPPHPP). 27–34 (GPTASGKT) contacts ATP. Position 29–34 (29–34 (TASGKT)) interacts with substrate. Interaction with substrate tRNA stretches follow at residues 52–55 (DSAL), 176–180 (QRIAR), and 273–278 (RCVGYR).

This sequence belongs to the IPP transferase family. In terms of assembly, monomer. Mg(2+) is required as a cofactor.

The enzyme catalyses adenosine(37) in tRNA + dimethylallyl diphosphate = N(6)-dimethylallyladenosine(37) in tRNA + diphosphate. Its function is as follows. Catalyzes the transfer of a dimethylallyl group onto the adenine at position 37 in tRNAs that read codons beginning with uridine, leading to the formation of N6-(dimethylallyl)adenosine (i(6)A). This is tRNA dimethylallyltransferase from Albidiferax ferrireducens (strain ATCC BAA-621 / DSM 15236 / T118) (Rhodoferax ferrireducens).